A 254-amino-acid polypeptide reads, in one-letter code: 3-deoxy-manno-octulosonate cytidylyltransferase (254 aa).

This sequence belongs to the KdsB family.

The protein resides in the cytoplasm. It carries out the reaction 3-deoxy-alpha-D-manno-oct-2-ulosonate + CTP = CMP-3-deoxy-beta-D-manno-octulosonate + diphosphate. It participates in nucleotide-sugar biosynthesis; CMP-3-deoxy-D-manno-octulosonate biosynthesis; CMP-3-deoxy-D-manno-octulosonate from 3-deoxy-D-manno-octulosonate and CTP: step 1/1. It functions in the pathway bacterial outer membrane biogenesis; lipopolysaccharide biosynthesis. Activates KDO (a required 8-carbon sugar) for incorporation into bacterial lipopolysaccharide in Gram-negative bacteria. This chain is 3-deoxy-manno-octulosonate cytidylyltransferase, found in Haemophilus influenzae (strain 86-028NP).